We begin with the raw amino-acid sequence, 77 residues long: NEDD8-like protein RUB1 (77 aa).

Residues 1–74 (MIVKVKTLTG…MQLHLVLTLR (74 aa)) enclose the Ubiquitin-like domain. A Glycyl lysine isopeptide (Gly-Lys) (interchain with K-? in acceptor proteins) cross-link involves residue glycine 76. Asparagine 77 is a propeptide.

Interacts with CDC53 and DCN1.

Ubiquitin-like protein modifier that can be covalently attached to lysine residues of target proteins. Activated by the dimeric UBA3-ULA1 E1 enzyme and conjugated by the E2 UBC12 to substrate proteins. RUB1-conjugated (neddylated) substrate proteins include the cullins CDC53, RTT101 and CUL3, and the modification enhances the ubiquitin-ligase activity of the corresponding cullin-RING-based E3 ubiquitin-protein ligase complexes (CRLs). The polypeptide is NEDD8-like protein RUB1 (RUB1) (Saccharomyces cerevisiae (strain ATCC 204508 / S288c) (Baker's yeast)).